Here is a 343-residue protein sequence, read N- to C-terminus: ELAV-like protein 3 (343 aa).

RRM domains follow at residues 35 to 113, 121 to 202, and 260 to 338; these read TNLI…YARP, ANLY…FANN, and WCIF…FKTS.

This sequence belongs to the RRM elav family.

RNA-binding protein that binds to AU-rich sequences (AREs) of target mRNAs. May also bind poly-A tracts via RRM 3. May be involved in neuronal differentiation and maintenance. The sequence is that of ELAV-like protein 3 from Xenopus tropicalis (Western clawed frog).